The chain runs to 207 residues: Ras-related protein rab7 (207 aa).

GTP contacts are provided by residues 15 to 22, 34 to 40, 63 to 67, 125 to 128, and 156 to 157; these read GDSGVGKT, SNQYKAT, DTAGQ, NKID, and AK. The Effector region signature appears at 37–45; sequence YKATIGADF. Residues cysteine 205 and cysteine 207 are each lipidated (S-geranylgeranyl cysteine). Cysteine 207 carries the post-translational modification Cysteine methyl ester.

Belongs to the small GTPase superfamily. Rab family. (Microbial infection) Interacts with Singapore grouper iridoviral proteins VP69 (ORF69) and VP101 (ORF101). Ubiquitously expressed. Expressed in liver, spleen, kidney, brain, intestine, heart, skin, muscle, gill and stomach.

It localises to the late endosome membrane. It is found in the lysosome membrane. Key regulator in endo-lysosomal trafficking. Governs early-to-late endosomal maturation, microtubule minus-end as well as plus-end directed endosomal migration and positioning, and endosome-lysosome transport through different protein-protein interaction cascades. Plays important roles in microbial pathogen infection and survival, as well as in participating in the life cycle of viruses. This Epinephelus coioides (Orange-spotted grouper) protein is Ras-related protein rab7.